Consider the following 132-residue polypeptide: Small ribosomal subunit protein uS11 (132 aa).

This sequence belongs to the universal ribosomal protein uS11 family. In terms of assembly, part of the 30S ribosomal subunit. Interacts with proteins S7 and S18. Binds to IF-3.

In terms of biological role, located on the platform of the 30S subunit, it bridges several disparate RNA helices of the 16S rRNA. Forms part of the Shine-Dalgarno cleft in the 70S ribosome. The polypeptide is Small ribosomal subunit protein uS11 (Legionella pneumophila (strain Corby)).